Here is a 357-residue protein sequence, read N- to C-terminus: tRNA N6-adenosine threonylcarbamoyltransferase (357 aa).

Residues His-120 and His-124 each contribute to the Fe cation site. Residues Leu-143 to Gly-147, Asp-176, Gly-189, and Asn-289 each bind substrate. Position 317 (Asp-317) interacts with Fe cation.

It belongs to the KAE1 / TsaD family. It depends on Fe(2+) as a cofactor.

The protein localises to the cytoplasm. It catalyses the reaction L-threonylcarbamoyladenylate + adenosine(37) in tRNA = N(6)-L-threonylcarbamoyladenosine(37) in tRNA + AMP + H(+). In terms of biological role, required for the formation of a threonylcarbamoyl group on adenosine at position 37 (t(6)A37) in tRNAs that read codons beginning with adenine. Is involved in the transfer of the threonylcarbamoyl moiety of threonylcarbamoyl-AMP (TC-AMP) to the N6 group of A37, together with TsaE and TsaB. TsaD likely plays a direct catalytic role in this reaction. The sequence is that of tRNA N6-adenosine threonylcarbamoyltransferase from Polynucleobacter asymbioticus (strain DSM 18221 / CIP 109841 / QLW-P1DMWA-1) (Polynucleobacter necessarius subsp. asymbioticus).